A 580-amino-acid polypeptide reads, in one-letter code: CDKN2A-interacting protein (580 aa).

At Ala-2 the chain carries N-acetylalanine. One can recognise an XRN2-binding (XTBD) domain in the interval 19 to 133 (VEALRCDGET…KVKKRGISSS (115 aa)). A disordered region spans residues 129 to 356 (GISSSNEGVE…PKSSSSTNTS (228 aa)). Phosphoserine is present on Ser-131. Residues 155-167 (EQDHAKTSAKTER) are compositionally biased toward basic and acidic residues. A compositionally biased stretch (polar residues) spans 168–179 (ASAQQENSSTCI). Lys-184 participates in a covalent cross-link: Glycyl lysine isopeptide (Lys-Gly) (interchain with G-Cter in SUMO1). The span at 185-228 (SESGNSARSSGISSQNSSTSDGDRSVSSQSSSSVSSQVTTAGSG) shows a compositional bias: low complexity. A compositionally biased stretch (basic and acidic residues) spans 231 to 240 (SEAEAPDKHG). At Ser-241 the chain carries Phosphoserine. Polar residues predominate over residues 248-269 (LKSSVNSHMTQSTDSRQQSGSP). Low complexity-rich tracts occupy residues 274–313 (LEGS…PSSE) and 321–356 (SKTS…TNTS). Phosphothreonine is present on Thr-346. Position 389 is a phosphoserine (Ser-389). In terms of domain architecture, DRBM spans 462–537 (NHGELLNAAI…SREALKLFLK (76 aa)).

This sequence belongs to the CARF family. Interacts with CDKN2A/p14ARF, p53/TP53 and MDM2. Interacts with CHEK2 and MAPK3. Interacts with XRN2. Post-translationally, may be ubiquitinated. As to expression, ubiquitously expressed.

Its subcellular location is the nucleus. It is found in the nucleoplasm. Its function is as follows. Regulates DNA damage response in a dose-dependent manner through a number of signaling pathways involved in cell proliferation, apoptosis and senescence. The sequence is that of CDKN2A-interacting protein (CDKN2AIP) from Homo sapiens (Human).